Consider the following 365-residue polypeptide: 5-hydroxytryptamine receptor 1F (365 aa).

Residues 1–24 (MDFLNSSDQNLTSEELLNRMPSKI) lie on the Extracellular side of the membrane. Residues asparagine 5 and asparagine 10 are each glycosylated (N-linked (GlcNAc...) asparagine). The chain crosses the membrane as a helical span at residues 25 to 49 (LVSLTLSGLALMTTTINSLVIAAII). Residues 50-59 (VTRKLHHPAN) are Cytoplasmic-facing. Residues 60 to 81 (YLICSLAVTDFLVAVLVMPFSI) form a helical membrane-spanning segment. Topologically, residues 82-96 (VYIVRESWIMGQVVC) are extracellular. A disulfide bond links cysteine 96 and cysteine 172. The helical transmembrane segment at 97–119 (DIWLSVDITCCTCSILHLSAIAL) threads the bilayer. Serotonin contacts are provided by aspartate 103 and cysteine 107. The DRY motif; important for ligand-induced conformation changes motif lies at 120 to 122 (DRY). Topologically, residues 120 to 139 (DRYRAITDAVEYARKRTPKH) are cytoplasmic. The chain crosses the membrane as a helical span at residues 140–159 (AGIMITIVWIISVFISMPPL). Topologically, residues 160 to 178 (FWRHQGTSRDDECIIKHDH) are extracellular. The chain crosses the membrane as a helical span at residues 179-202 (IVSTIYSTFGAFYIPLALILILYY). The Cytoplasmic portion of the chain corresponds to 203-291 (KIYRAAKTLY…KISGTRERKA (89 aa)). The helical transmembrane segment at 292–315 (ATTLGLILGAFVICWLPFFVKELV) threads the bilayer. Residues 316–327 (VNVCDKCKISEE) are Extracellular-facing. A helical membrane pass occupies residues 328–350 (MSNFLAWLGYLNSLINPLIYTIF). The short motif at 343 to 347 (NPLIY) is the NPxxY motif; important for ligand-induced conformation changes and signaling element. Over 351-365 (NEDFKKAFQKLVRCR) the chain is Cytoplasmic.

It belongs to the G-protein coupled receptor 1 family.

The protein localises to the cell membrane. G-protein coupled receptor for 5-hydroxytryptamine (serotonin). Also functions as a receptor for various alkaloids and psychoactive substances. Ligand binding causes a conformation change that triggers signaling via guanine nucleotide-binding proteins (G proteins) and modulates the activity of downstream effectors, such as adenylate cyclase. HTR1F is coupled to G(i)/G(o) G alpha proteins and mediates inhibitory neurotransmission by inhibiting adenylate cyclase activity. This is 5-hydroxytryptamine receptor 1F (HTR1F) from Pan troglodytes (Chimpanzee).